A 765-amino-acid polypeptide reads, in one-letter code: Putative chloride channel-like protein CLC-g (765 aa).

Transmembrane regions (helical) follow at residues 67-87 (VFMKWLLCFCIGIIVSLIGFA), 116-136 (FVVFSVTNLILTLFASVITAF), 167-187 (LIIKIIGNISAVSASLLIGKA), 190-210 (MVHTGACVASILGQGGSKRYR), 232-252 (GAAAGIAASFRAPVGGVLFAL), 262-282 (ALLWRIFFSTAVVAIVLRALI), 315-335 (VLPVLLLGVVGGILGSLYNFL), 355-375 (ILLACAISIFTSCLLFGLPFL), 438-458 (FSVLVFFVTCFFLSIFSYGIV), 462-482 (GLFVPVIVTGASYGRFVGMLL), 494-514 (AVLGAASFLGGTMRMTVSTCV), and 515-535 (ILLELTNNLLLLPMMMVVLLI). A CBS 1 domain is found at 568–640 (MRQLLVGDVV…LLKKRVFMPS (73 aa)). Ser-646 is subject to Phosphoserine. The 62-residue stretch at 687–748 (FSNASPYTVV…PEHILGLHPS (62 aa)) folds into the CBS 2 domain. Residues 715–735 (HLLVIPKTSNRPPVVGILTRH) traverse the membrane as a helical segment.

This sequence belongs to the chloride channel (TC 2.A.49) family. As to quaternary structure, homodimer. Interacts with PP2A5.

The protein localises to the membrane. Putative voltage-gated chloride channel. The protein is Putative chloride channel-like protein CLC-g (CLC-G) of Arabidopsis thaliana (Mouse-ear cress).